The following is an 825-amino-acid chain: Probable inorganic carbon transporter subunit DabA (825 aa).

Zn(2+) contacts are provided by cysteine 334, aspartate 336, histidine 521, and cysteine 536.

Belongs to the inorganic carbon transporter (TC 9.A.2) DabA family. In terms of assembly, forms a complex with DabB. It depends on Zn(2+) as a cofactor.

It localises to the cell inner membrane. Its function is as follows. Part of an energy-coupled inorganic carbon pump. The polypeptide is Probable inorganic carbon transporter subunit DabA (Acidithiobacillus ferrooxidans (strain ATCC 53993 / BNL-5-31) (Leptospirillum ferrooxidans (ATCC 53993))).